The primary structure comprises 126 residues: DNA-directed RNA polymerase 35 kDa subunit (126 aa).

Belongs to the poxviridae DNA-directed RNA polymerase 35 kDa subunit family. The DNA-dependent RNA polymerase used for intermediate and late genes expression consists of eight subunits 147 kDa, 133 kDa, 35 kDa, 30 kDa, 22 kDa, 19 kDa, 18 kDa and 7 kDa totalling more than 500 kDa in mass. The same holoenzyme, with the addition of the transcription-specificity factor RAP94, is used for early gene expression.

Its subcellular location is the virion. The catalysed reaction is RNA(n) + a ribonucleoside 5'-triphosphate = RNA(n+1) + diphosphate. Functionally, part of the DNA-dependent RNA polymerase which catalyzes the transcription of viral DNA into RNA using the four ribonucleoside triphosphates as substrates. Responsible for the transcription of early, intermediate and late genes. DNA-dependent RNA polymerase associates with the early transcription factor (ETF) thereby allowing the early genes transcription. Late transcription, and probably also intermediate transcription, require newly synthesized RNA polymerase. The sequence is that of DNA-directed RNA polymerase 35 kDa subunit (RPO35) from Ovis aries (Sheep).